The sequence spans 324 residues: Probable cell division protein WhiA (324 aa).

A DNA-binding region (H-T-H motif) is located at residues 276 to 310 (TLKELGEMMQGGKVSKSGINHRLRKIDEFADKLRN).

It belongs to the WhiA family.

Involved in cell division and chromosome segregation. This chain is Probable cell division protein WhiA, found in Shouchella clausii (strain KSM-K16) (Alkalihalobacillus clausii).